Consider the following 159-residue polypeptide: MEQSHQNLQSQFFIEHILQILPHRYPMLLIDRVVELEANRKIVAYKNITFNEDVFNGHFPNKPIFPGVLIVEGMAQTGGFLAFTSLWGFDPEIAKTKIVYFMTIDKVKFRIPVTPGDRLEYHLEVLKHKGMIWQVGGTAQVDGKVVAEAELKAMIAERE.

Residue H58 is part of the active site.

It belongs to the thioester dehydratase family. FabZ subfamily.

It localises to the cytoplasm. It carries out the reaction a (3R)-hydroxyacyl-[ACP] = a (2E)-enoyl-[ACP] + H2O. Involved in unsaturated fatty acids biosynthesis. Catalyzes the dehydration of short chain beta-hydroxyacyl-ACPs and long chain saturated and unsaturated beta-hydroxyacyl-ACPs. This Helicobacter pylori (strain G27) protein is 3-hydroxyacyl-[acyl-carrier-protein] dehydratase FabZ.